Consider the following 141-residue polypeptide: Hemoglobin subunit alpha-D (141 aa).

Residues 1–141 (MLNHDEKQLI…VSAVLAEKYR (141 aa)) form the Globin domain. The heme b site is built by H58 and H87.

This sequence belongs to the globin family. In terms of assembly, heterotetramer of two alpha-D chains and two beta chains. In terms of tissue distribution, red blood cells.

Involved in oxygen transport from the lung to the various peripheral tissues. This is Hemoglobin subunit alpha-D (HBAD) from Chrysemys picta bellii (Western painted turtle).